The sequence spans 218 residues: Ras-related protein RABA1h (218 aa).

Residue G20–S27 participates in GTP binding. An Effector region motif is present at residues S42–F50. GTP is bound by residues D68–Q72, N126–D129, and S156–A157. S-geranylgeranyl cysteine attachment occurs at residues C215 and C216.

It belongs to the small GTPase superfamily. Rab family.

It localises to the cell membrane. In terms of biological role, intracellular vesicle trafficking and protein transport. In Arabidopsis thaliana (Mouse-ear cress), this protein is Ras-related protein RABA1h (RABA1H).